The primary structure comprises 285 residues: Polyamine aminopropyltransferase (285 aa).

The PABS domain occupies 5–241; it reads QDWFTESYPD…GWWSATMAGK (237 aa). Q35 is a binding site for S-methyl-5'-thioadenosine. Residues H66 and D90 each contribute to the spermidine site. Residues D110 and 141–142 contribute to the S-methyl-5'-thioadenosine site; that span reads DG. The active-site Proton acceptor is D160. 160 to 163 lines the spermidine pocket; the sequence is DSTD. Residue P167 coordinates S-methyl-5'-thioadenosine.

The protein belongs to the spermidine/spermine synthase family. In terms of assembly, homodimer or homotetramer.

It is found in the cytoplasm. The catalysed reaction is S-adenosyl 3-(methylsulfanyl)propylamine + putrescine = S-methyl-5'-thioadenosine + spermidine + H(+). It functions in the pathway amine and polyamine biosynthesis; spermidine biosynthesis; spermidine from putrescine: step 1/1. In terms of biological role, catalyzes the irreversible transfer of a propylamine group from the amino donor S-adenosylmethioninamine (decarboxy-AdoMet) to putrescine (1,4-diaminobutane) to yield spermidine. This is Polyamine aminopropyltransferase from Methylococcus capsulatus (strain ATCC 33009 / NCIMB 11132 / Bath).